We begin with the raw amino-acid sequence, 266 residues long: Putative carbamate hydrolase RutD (266 aa).

It belongs to the AB hydrolase superfamily. Hydrolase RutD family.

The catalysed reaction is carbamate + 2 H(+) = NH4(+) + CO2. Its function is as follows. Involved in pyrimidine catabolism. May facilitate the hydrolysis of carbamate, a reaction that can also occur spontaneously. The sequence is that of Putative carbamate hydrolase RutD from Escherichia coli O26:H11 (strain 11368 / EHEC).